The following is a 335-amino-acid chain: Tetraacyldisaccharide 4'-kinase (335 aa).

51 to 58 (HVGGAGKT) lines the ATP pocket.

Belongs to the LpxK family.

It catalyses the reaction a lipid A disaccharide + ATP = a lipid IVA + ADP + H(+). It functions in the pathway glycolipid biosynthesis; lipid IV(A) biosynthesis; lipid IV(A) from (3R)-3-hydroxytetradecanoyl-[acyl-carrier-protein] and UDP-N-acetyl-alpha-D-glucosamine: step 6/6. Functionally, transfers the gamma-phosphate of ATP to the 4'-position of a tetraacyldisaccharide 1-phosphate intermediate (termed DS-1-P) to form tetraacyldisaccharide 1,4'-bis-phosphate (lipid IVA). This Nitrobacter hamburgensis (strain DSM 10229 / NCIMB 13809 / X14) protein is Tetraacyldisaccharide 4'-kinase.